The chain runs to 77 residues: Large ribosomal subunit protein uL24 (77 aa).

A disordered region spans residues Lys-42–Gly-61.

It belongs to the universal ribosomal protein uL24 family. As to quaternary structure, part of the 50S ribosomal subunit.

Its function is as follows. One of two assembly initiator proteins, it binds directly to the 5'-end of the 23S rRNA, where it nucleates assembly of the 50S subunit. One of the proteins that surrounds the polypeptide exit tunnel on the outside of the subunit. The chain is Large ribosomal subunit protein uL24 from Lactobacillus acidophilus (strain ATCC 700396 / NCK56 / N2 / NCFM).